Here is a 102-residue protein sequence, read N- to C-terminus: ATP synthase subunit c (102 aa).

The next 2 membrane-spanning stretches (helical) occupy residues 34-54 (IGAG…GYIF) and 80-100 (AVSE…IFVA).

The protein belongs to the ATPase C chain family. F-type ATPases have 2 components, F(1) - the catalytic core - and F(0) - the membrane proton channel. F(1) has five subunits: alpha(3), beta(3), gamma(1), delta(1), epsilon(1). F(0) has three main subunits: a(1), b(2) and c(10-14). The alpha and beta chains form an alternating ring which encloses part of the gamma chain. F(1) is attached to F(0) by a central stalk formed by the gamma and epsilon chains, while a peripheral stalk is formed by the delta and b chains.

The protein localises to the cell membrane. In terms of biological role, f(1)F(0) ATP synthase produces ATP from ADP in the presence of a proton or sodium gradient. F-type ATPases consist of two structural domains, F(1) containing the extramembraneous catalytic core and F(0) containing the membrane proton channel, linked together by a central stalk and a peripheral stalk. During catalysis, ATP synthesis in the catalytic domain of F(1) is coupled via a rotary mechanism of the central stalk subunits to proton translocation. Functionally, key component of the F(0) channel; it plays a direct role in translocation across the membrane. A homomeric c-ring of between 10-14 subunits forms the central stalk rotor element with the F(1) delta and epsilon subunits. This Mycoplasma genitalium (strain ATCC 33530 / DSM 19775 / NCTC 10195 / G37) (Mycoplasmoides genitalium) protein is ATP synthase subunit c.